We begin with the raw amino-acid sequence, 562 residues long: F-box only protein 33 (562 aa).

An F-box domain is found at 68-114 (AAGAASLPSELIVHIFSFLPAPDRLRASASCSHWRECLFYPALWPQL). The span at 155-173 (GGGPGDGGSGGGTDTGTGG) shows a compositional bias: gly residues. A disordered region spans residues 155–176 (GGGPGDGGSGGGTDTGTGGEDG).

As to quaternary structure, part of the SCF (SKP1-CUL1-F-box) E3 ubiquitin-protein ligase complex SCF(FBXO33) formed of CUL1, SKP1, RBX1 and FBXO33. Interacts via its N-terminus with YBX1 CSD domain. Directly interacts with SKP1 and CUL1.

It functions in the pathway protein modification; protein ubiquitination. Substrate recognition component of a SCF (SKP1-CUL1-F-box protein) E3 ubiquitin-protein ligase complex which mediates the ubiquitination and subsequent proteasomal degradation of target proteins. Probably recognizes and binds to phosphorylated target proteins. Recognizes YBX1. This Mus musculus (Mouse) protein is F-box only protein 33 (Fbxo33).